A 753-amino-acid polypeptide reads, in one-letter code: LIM domain and actin-binding protein 1 (753 aa).

At M1 the chain carries N-acetylmethionine. S15 is subject to Phosphoserine. Residues 46–56 (EEANMERKKNN) show a composition bias toward basic and acidic residues. 2 disordered regions span residues 46-66 (EEAN…HFRR) and 82-186 (GAEF…TSGK). S132 is subject to Phosphoserine. Residues 143–152 (PRSENSHDFK) are compositionally biased toward basic and acidic residues. The Required for interaction with NPC1L1 signature appears at 164–166 (CLG). Basic and acidic residues predominate over residues 167–177 (DSRHEAEKPET). A phosphoserine mark is found at S225, S230, S242, and S263. Disordered stretches follow at residues 276–326 (AAVS…VSTT) and 341–379 (TCNS…TAKK). Positions 278-291 (VSKQSSPASYTNEL) are enriched in polar residues. Residues 292–305 (KTSESKTHKWEQKE) are compositionally biased toward basic and acidic residues. Residues 342 to 351 (CNSQVKSEAQ) show a composition bias toward polar residues. A phosphoserine mark is found at S348, S360, S367, and S372. Positions 363–375 (ARTSSLPESSPSK) are enriched in polar residues. One can recognise an LIM zinc-binding domain in the interval 386 to 446 (ESCVECQKTV…KPHFNQLFKS (61 aa)). The residue at position 437 (K437) is an N6-succinyllysine. Phosphoserine occurs at positions 467, 485, and 488. 3 disordered regions span residues 467–493 (SDNE…GVED), 505–669 (SMEA…FELE), and 682–703 (EDDN…GWSG). Residues 491-511 (VEDAPIAKVGVLAASMEAKAS) are required for interaction with MYO5B. 2 stretches are compositionally biased toward basic and acidic residues: residues 512-525 (SQRE…ETKK) and 554-565 (WPPEDDVCKTEA). Residues 598-609 (SSIKSPKASSPS) are compositionally biased toward low complexity. Phosphoserine occurs at positions 599, 602, 607, and 615. Positions 630-666 (MERKQTENARPSGEKENVGKSRWQGEEVPRSKDRSSF) are enriched in basic and acidic residues. 3 positions are modified to phosphoserine: S692, S720, and S735.

Interacts with NPC1L1; bridges NPC1L1 with MYO5B. Interacts with MYO5B; bridges MYO5B with NPC1L1. Interacts with PXN; this complex stabilizes actin dynamics. Binds to G-actin and F-actin. Interacts with LUZP1 (via C-terminus); both proteins restrict ciliation and may work together to regulate this process. Binds RAB40B (GTP-bound); interaction influences LIMA1 subcellular localization in lamellipodia during cell migration. In terms of processing, phosphorylation of the C-terminal region by MAPK1/MAPK3 reduces its association with F-actin and contributes to actin filament reorganization and enhances cell motility. Post-translationally, ubiquitinated by the ECS(RAB40B) complex leading to its degradation. As to expression, highly expressed in the small intestine, including the duodenum, jejunum, and ileum. Low expression in the liver and very low expressed in the heart, spleen, lung, brain, and pancreas. Isoform Alpha is highly expressed in embryos from day 7-11 and in adult spleen and lung. Isoform Beta expression is highest in adult kidney, testis, lung and liver, intermediate in heart, brain, spleen, skeletal muscle and low in embryos.

The protein localises to the cytoplasm. It localises to the cell junction. The protein resides in the focal adhesion. Its subcellular location is the cytoskeleton. It is found in the stress fiber. The protein localises to the cell membrane. It localises to the cell projection. The protein resides in the ruffle. Its subcellular location is the lamellipodium. Actin-binding protein involved in actin cytoskeleton regulation and dynamics. Increases the number and size of actin stress fibers and inhibits membrane ruffling. Inhibits actin filament depolymerization. Bundles actin filaments, delays filament nucleation and reduces formation of branched filaments. Acts as a negative regulator of primary cilium formation. Plays a role in cholesterol homeostasis. Influences plasma cholesterol levels through regulation of intestinal cholesterol absorption. May act as a scaffold protein by regulating NPC1L1 transportation, an essential protein for cholesterol absorption, to the plasma membrane by recruiting MYO5B to NPC1L1, and thus facilitates cholesterol uptake. In Mus musculus (Mouse), this protein is LIM domain and actin-binding protein 1 (Lima1).